The sequence spans 265 residues: Tryptophan 2,3-dioxygenase (265 aa).

Substrate contacts are provided by residues 38-42 (FIVVH) and Arg-104. His-223 contacts heme. Substrate is bound at residue Thr-237.

Belongs to the tryptophan 2,3-dioxygenase family. Homotetramer. It depends on heme as a cofactor.

It catalyses the reaction L-tryptophan + O2 = N-formyl-L-kynurenine. The protein operates within amino-acid degradation; L-tryptophan degradation via kynurenine pathway; L-kynurenine from L-tryptophan: step 1/2. In terms of biological role, heme-dependent dioxygenase that catalyzes the oxidative cleavage of the L-tryptophan (L-Trp) pyrrole ring and converts L-tryptophan to N-formyl-L-kynurenine. Catalyzes the oxidative cleavage of the indole moiety. The protein is Tryptophan 2,3-dioxygenase of Anaeromyxobacter sp. (strain K).